Here is a 1044-residue protein sequence, read N- to C-terminus: Elongation factor 3B (1044 aa).

Serine 2 bears the N-acetylserine mark. Residues glutamine 5–isoleucine 42 form an HEAT 1 repeat. ADP-binding residues include isoleucine 42, histidine 44, and serine 83. 6 HEAT repeats span residues proline 86–proline 123, valine 124–glutamate 162, leucine 166–asparagine 203, aspartate 205–proline 241, alanine 242–aspartate 279, and proline 285–valine 323. An N6,N6,N6-trimethyllysine mark is found at lysine 187 and lysine 196. ADP contacts are provided by threonine 392, histidine 396, and glutamate 397. 2 ABC transporter domains span residues aspartate 426 to leucine 641 and valine 667 to glutamate 993. Asparagine 703 is a binding site for ADP. The residue at position 789 (lysine 789) is an N6,N6,N6-trimethyllysine. Residues glutamate 922, asparagine 925, and histidine 951 each contribute to the ADP site. Residue threonine 972 is modified to Phosphothreonine. The residue at position 974 (serine 974) is a Phosphoserine. The interval glycine 975–phenylalanine 1044 is disordered. A compositionally biased stretch (basic and acidic residues) spans arginine 987–aspartate 999. The segment covering arginine 1020–lysine 1031 has biased composition (basic residues). Phosphoserine occurs at positions 1039 and 1040.

It belongs to the ABC transporter superfamily. ABCF family. EF3 subfamily. In terms of assembly, monomer.

The protein localises to the cytoplasm. The catalysed reaction is ATP + H2O = ADP + phosphate + H(+). It participates in protein biosynthesis; polypeptide chain elongation. Functionally, ribosome-dependent ATPase that promotes the translation of proteins required for detoxification of reactive oxygen species. Required for the ATP-dependent release of deacylated tRNA from the ribosomal E-site during protein biosynthesis. Stimulates the eEF1A-dependent binding of aminoacyl-tRNA to the ribosomal A-site, which has reduced affinity for tRNA as long as the E-site is occupied. Assists translation termination by stimulating the release of nascent protein from the ribosome by release factors. This chain is Elongation factor 3B, found in Saccharomyces cerevisiae (strain ATCC 204508 / S288c) (Baker's yeast).